Reading from the N-terminus, the 265-residue chain is Transcriptional repressor DcmR (265 aa).

Residues 17 to 36 constitute a DNA-binding region (H-T-H motif); that stretch reads LDIKQAASLLNVSEASLRRW.

Monomer.

Transcriptional repressor of the dcmA gene and of its own gene. The polypeptide is Transcriptional repressor DcmR (dcmR) (Methylorubrum extorquens (strain DSM 6343 / CIP 106787 / DM4) (Methylobacterium extorquens)).